The following is a 220-amino-acid chain: Ribosome maturation factor RimM (220 aa).

Residues 143-220 enclose the PRC barrel domain; the sequence is EGEFYWVDLI…RIVVDWGLDY (78 aa).

This sequence belongs to the RimM family. In terms of assembly, binds ribosomal protein uS19.

Its subcellular location is the cytoplasm. An accessory protein needed during the final step in the assembly of 30S ribosomal subunit, possibly for assembly of the head region. Essential for efficient processing of 16S rRNA. May be needed both before and after RbfA during the maturation of 16S rRNA. It has affinity for free ribosomal 30S subunits but not for 70S ribosomes. The sequence is that of Ribosome maturation factor RimM from Cupriavidus metallidurans (strain ATCC 43123 / DSM 2839 / NBRC 102507 / CH34) (Ralstonia metallidurans).